We begin with the raw amino-acid sequence, 355 residues long: MTIKVLIIDDSALIRSLLTEIINQQPDLEVVGTAPDPLIAREMIKQKNPDVLTLDVEMPKMDGLDFLERLMRLRPMPVVMISSLTERGSEITMRAMELGAVDFVTKPKISIANGMHEYSEMIADKIRAASRARLIARKPLTPVAGGAGLPLVGNPLISSEKLIIIGASTGGTEAIKSFLMQMPSDCPGILITQHMPAGFTQSFANRLNALCKISVQEAKGGERVLPGHAYIAPGHSHLLLARSGANYVTQLDDGPPVSRHRPSVDVLFSSAANNAGKNAIGVILTGMGKDGAEGMLKMKQAGAYNFAQDEASCVVFGMPKEAIAMGGVDDVSSLNDMPGRVLQYLAANSGRALRV.

The region spanning 4-121 (KVLIIDDSAL…ANGMHEYSEM (118 aa)) is the Response regulatory domain. 4-aspartylphosphate is present on aspartate 55. One can recognise a CheB-type methylesterase domain in the interval 156–348 (LISSEKLIII…GRVLQYLAAN (193 aa)). Residues serine 168, histidine 194, and aspartate 290 contribute to the active site.

This sequence belongs to the CheB family. In terms of processing, phosphorylated by CheA. Phosphorylation of the N-terminal regulatory domain activates the methylesterase activity.

Its subcellular location is the cytoplasm. The enzyme catalyses [protein]-L-glutamate 5-O-methyl ester + H2O = L-glutamyl-[protein] + methanol + H(+). It catalyses the reaction L-glutaminyl-[protein] + H2O = L-glutamyl-[protein] + NH4(+). Functionally, involved in chemotaxis. Part of a chemotaxis signal transduction system that modulates chemotaxis in response to various stimuli. Catalyzes the demethylation of specific methylglutamate residues introduced into the chemoreceptors (methyl-accepting chemotaxis proteins or MCP) by CheR. Also mediates the irreversible deamidation of specific glutamine residues to glutamic acid. The chain is Protein-glutamate methylesterase/protein-glutamine glutaminase from Methylobacillus flagellatus (strain ATCC 51484 / DSM 6875 / VKM B-1610 / KT).